Here is a 138-residue protein sequence, read N- to C-terminus: Small ribosomal subunit protein uS11 (138 aa).

It belongs to the universal ribosomal protein uS11 family. In terms of assembly, part of the 30S ribosomal subunit.

Located on the platform of the 30S subunit. In Pyrobaculum arsenaticum (strain DSM 13514 / JCM 11321 / PZ6), this protein is Small ribosomal subunit protein uS11.